Consider the following 3206-residue polypeptide: Highly reducing polyketide synthase ltbA (3206 aa).

Residues 5 to 434 (PAPIAIIGVG…GTNCHVILEA (430 aa)) enclose the Ketosynthase family 3 (KS3) domain. Residues cysteine 179, histidine 314, and histidine 354 each act as for beta-ketoacyl synthase activity in the active site. Residues 441–463 (PTGTNGIKTNGTRINGIKTNGAD) are compositionally biased toward polar residues. Positions 441-472 (PTGTNGIKTNGTRINGIKTNGADTNERESMKN) are disordered. Residues 575–890 (VFSGQGAQWH…EYLSALQRNT (316 aa)) form a malonyl-CoA:ACP transacylase (MAT) domain region. Residues 958-1098 (HDLLGLFDPA…GEITVEYETD (141 aa)) form an N-terminal hotdog fold region. Residues 958–1278 (HDLLGLFDPA…LLVNLRAIGE (321 aa)) are dehydratase (DH) domain. The PKS/mFAS DH domain maps to 958–1284 (HDLLGLFDPA…AIGETREDED (327 aa)). Histidine 990 serves as the catalytic Proton acceptor; for dehydratase activity. A C-terminal hotdog fold region spans residues 1128-1284 (DTDMTKSEFY…AIGETREDED (157 aa)). Residue aspartate 1193 is the Proton donor; for dehydratase activity of the active site. The tract at residues 1450 to 1640 (ESGILVGPYE…LARNGFGGIH (191 aa)) is methyltransferase (CMet) domain. The enoyl reductase (ER) domain stretch occupies residues 1871–2185 (LLSSLRFVDD…RKHTGKVVLQ (315 aa)). The segment at 2208–2395 (GTYVAAGGLG…SVDAHGALKE (188 aa)) is ketoreductase (KR) domain. One can recognise a Carrier domain in the interval 2499–2577 (EEAEQLIRDA…ALAATVASRS (79 aa)). Residue serine 2537 is modified to O-(pantetheine 4'-phosphoryl)serine. The tract at residues 2584 to 2611 (IRHSSRLQEATTQAENKDAPKNEKEGPS) is disordered. Positions 2598–2610 (ENKDAPKNEKEGP) are enriched in basic and acidic residues. The tract at residues 2994–3206 (HLIPSFGKAV…IKTIIQAGQE (213 aa)) is carnitine O-acyltransferase (cAT) domain.

Requires pantetheine 4'-phosphate as cofactor.

It participates in secondary metabolite biosynthesis. Functionally, highly reducing polyketide synthase; part of the gene cluster that mediates the biosynthesis of luteodienoside A, a glycosylated polyketide consisting of an unusual 1-O-beta-D-glucopyranosyl-myo-inositol (glucinol) ester of 3-hydroxy-2,2,4-trimethylocta-4,6-dienoic acid. LtbA produces the trimethylated polyketide chain from acetyl-CoA, malonyl-CoA and S-adenosylmethionine (SAM). The ltbA carnitine O-acyltransferase (cAT) domain then uses glucinol produced by the glycosyltransferase ltbB as an offloading substrate to release luteodienoside A. Furthermore, the PKS C-methyltransferase (CMeT) domain is capable of catalysing gem-dimethylation of the 3-hydroxy-2,2,4-trimethylocta-4,6-dienoic acid intermediate, without requiring reversible product release and recapture by the cAT domain. Since ltbA and ltbB are sufficient for the biosynthesis of luteodienoside A, the functions of the methyltransferase ltbC and the FAD-binding monooxygenase ltbD within the pathway remain obscur. The chain is Highly reducing polyketide synthase ltbA from Aspergillus luteorubrus.